A 350-amino-acid polypeptide reads, in one-letter code: B1 bradykinin receptor (350 aa).

Residues 1–41 (MASRAPLELLPLNRSQLSPPNATTCDDAPEAWDLLHRVLPS) are Extracellular-facing. Residues Asn-13 and Asn-21 are each glycosylated (N-linked (GlcNAc...) asparagine). The helical transmembrane segment at 42 to 62 (VIIIICVCGLLGNLLVLAVLL) threads the bilayer. Residues 63–72 (RPRRRLNVAE) lie on the Cytoplasmic side of the membrane. The chain crosses the membrane as a helical span at residues 73–93 (MYLANLAASDLVFVLGLPFWA). Topologically, residues 94 to 110 (ANISNQFRWPFGGLLCR) are extracellular. N-linked (GlcNAc...) asparagine glycosylation occurs at Asn-95. Cys-109 and Cys-186 are joined by a disulfide. Residues 111 to 131 (LVNGVIKANLFISIFLVVAIS) form a helical membrane-spanning segment. Residues 132-150 (RDRYRALVHPMATRRRRQA) lie on the Cytoplasmic side of the membrane. Residues 151–171 (RATCVLIWVAGSLLSVPTFLF) traverse the membrane as a helical segment. Residues 172–204 (RSIEAVPELNNDSACVLLHPPGAWHVARMVELN) lie on the Extracellular side of the membrane. The N-linked (GlcNAc...) asparagine glycan is linked to Asn-182. Residues 205 to 225 (VLGFLLPLAAIVFFNCHILAS) traverse the membrane as a helical segment. The Cytoplasmic segment spans residues 226–248 (LRGRPEVRGARCGGPPDGRTTAL). The chain crosses the membrane as a helical span at residues 249–269 (ILTFVAAFLVCWTPYHFFAFL). Over 270 to 292 (EFLTQVQVVRGCFWENFKDLGLQ) the chain is Extracellular. Residues 293–313 (YASFFAFINSCLNPVIYVFVG) form a helical membrane-spanning segment. Over 314 to 350 (RLFRTRVWDLFKQCAPRRPPAVSWSHRKRVLQLFWQN) the chain is Cytoplasmic. Cys-327 carries S-palmitoyl cysteine lipidation.

The protein belongs to the G-protein coupled receptor 1 family. Bradykinin receptor subfamily. BDKRB1 sub-subfamily.

The protein localises to the cell membrane. In terms of biological role, this is a receptor for bradykinin. Could be a factor in chronic pain and inflammation. This Canis lupus familiaris (Dog) protein is B1 bradykinin receptor (BDKRB1).